A 356-amino-acid polypeptide reads, in one-letter code: MSSLADLINLDLSDSTDQIIAEYIWIGGSGLDMRSKARTLPGPVTDPSQLPKWNYDGSSTGQAPGDDSEVIIYPQAIFKDPFRRGNNILVMCDAYTPAGEPIPTNKRHAAAKIFEDPSVVAEETWYGIEQEYTLLQKDIKWPVGWPVGGFPGPQGPYYCGVGADKAFGRDIVDSHYKACLYAGINVSGTNGEVMPGQWEFQVGPTVGIAAADQVWVARYILERITELAGVVLSLDPKPIPGDWNGAGAHTNYSTKSMREDGGYEVIKKAIEKLGLRHKEHIAAYGEGNERRLTGKHETADINTFLWGVANRGASIRVGRDTEQAGKGYFEDRRPASNMDPYTVTSMIAESTILWKP.

Ser2 carries the post-translational modification N-acetylserine. Phosphoserine occurs at positions 2 and 48. The region spanning 19-99 (IIAEYIWIGG…VMCDAYTPAG (81 aa)) is the GS beta-grasp domain. The interval 37 to 66 (ARTLPGPVTDPSQLPKWNYDGSSTGQAPGD) is disordered. A GS catalytic domain is found at 106 to 356 (KRHAAAKIFE…IAESTILWKP (251 aa)).

The protein belongs to the glutamine synthetase family. In terms of assembly, homooctamer. Interacts with GRF3. As to expression, expressed in the pericycle in the region of lateral root emergence.

The protein resides in the cytoplasm. It catalyses the reaction L-glutamate + NH4(+) + ATP = L-glutamine + ADP + phosphate + H(+). Functionally, high-affinity glutamine synthetase. May contribute to the homeostatic control of glutamine synthesis in roots. The sequence is that of Glutamine synthetase cytosolic isozyme 1-4 from Arabidopsis thaliana (Mouse-ear cress).